Consider the following 182-residue polypeptide: Histone deacetylase complex subunit SAP30L (182 aa).

Met1 carries the N-acetylmethionine modification. The span at 1–10 shows a compositional bias: acidic residues; sequence MNGFSTEEDS. A disordered region spans residues 1–22; it reads MNGFSTEEDSREGPPAAPAAAP. Cystine bridges form between Cys28-Cys29 and Cys37-Cys73. The Atypical zinc finger occupies 28–76; that stretch reads CCLIADGERCVRPAGNASFSKRVQKSISQKKLKLDIDKSVRHLYICDFH. Residue Lys48 forms a Glycyl lysine isopeptide (Lys-Gly) (interchain with G-Cter in SUMO2) linkage. A disordered region spans residues 84–103; sequence RNKRKRKASDDGGDSPEHDA. A Nuclear localization signal (NLS) motif is present at residues 85 to 90; sequence NKRKRK. The segment at 87–89 is important for DNA and phosphoinositide binding; the sequence is RKR. Residues Ser92 and Ser98 each carry the phosphoserine modification. Glycyl lysine isopeptide (Lys-Gly) (interchain with G-Cter in SUMO2) cross-links involve residues Lys154, Lys165, and Lys174.

This sequence belongs to the SAP30 family. Interacts with components of the histone deacetylase complex SIN3A, HDAC1 and HDAC2. Binds histones and nucleosomes. Interacts with FEZ1.

Its subcellular location is the nucleus. It is found in the nucleolus. Functionally, functions as a transcription repressor, probably via its interaction with histone deacetylase complexes. Involved in the functional recruitment of the class 1 Sin3-histone deacetylase complex (HDAC) to the nucleolus. Binds DNA, apparently without sequence-specificity, and bends bound double-stranded DNA. Binds phosphoinositol phosphates (phosphoinositol 3-phosphate, phosphoinositol 4-phosphate and phosphoinositol 5-phosphate) via the same basic sequence motif that mediates DNA binding and nuclear import. In Mus musculus (Mouse), this protein is Histone deacetylase complex subunit SAP30L (Sap30l).